The primary structure comprises 156 residues: Large ribosomal subunit protein uL15 (156 aa).

Positions 1 to 16 are enriched in basic residues; it reads MVRRFKRAVKYRRGSR. The segment at 1 to 35 is disordered; it reads MVRRFKRAVKYRRGSRTHGWGRVGQHRKSGGSGGK.

Belongs to the universal ribosomal protein uL15 family. Part of the 50S ribosomal subunit.

Functionally, binds to the 23S rRNA. This chain is Large ribosomal subunit protein uL15, found in Pyrobaculum neutrophilum (strain DSM 2338 / JCM 9278 / NBRC 100436 / V24Sta) (Thermoproteus neutrophilus).